The sequence spans 373 residues: Probable tRNA sulfurtransferase (373 aa).

The region spanning 54–158 (NKNIEELSKV…NDVAYFYHKI (105 aa)) is the THUMP domain. ATP is bound by residues 176 to 177 (LF), 201 to 202 (NF), Lys-256, Gly-278, and Gln-287.

Belongs to the ThiI family.

The protein localises to the cytoplasm. The catalysed reaction is [ThiI sulfur-carrier protein]-S-sulfanyl-L-cysteine + a uridine in tRNA + 2 reduced [2Fe-2S]-[ferredoxin] + ATP + H(+) = [ThiI sulfur-carrier protein]-L-cysteine + a 4-thiouridine in tRNA + 2 oxidized [2Fe-2S]-[ferredoxin] + AMP + diphosphate. It carries out the reaction [ThiS sulfur-carrier protein]-C-terminal Gly-Gly-AMP + S-sulfanyl-L-cysteinyl-[cysteine desulfurase] + AH2 = [ThiS sulfur-carrier protein]-C-terminal-Gly-aminoethanethioate + L-cysteinyl-[cysteine desulfurase] + A + AMP + 2 H(+). It participates in cofactor biosynthesis; thiamine diphosphate biosynthesis. Functionally, catalyzes the ATP-dependent transfer of a sulfur to tRNA to produce 4-thiouridine in position 8 of tRNAs, which functions as a near-UV photosensor. Also catalyzes the transfer of sulfur to the sulfur carrier protein ThiS, forming ThiS-thiocarboxylate. This is a step in the synthesis of thiazole, in the thiamine biosynthesis pathway. The sulfur is donated as persulfide by IscS. The polypeptide is Probable tRNA sulfurtransferase (Saccharolobus islandicus (strain M.14.25 / Kamchatka #1) (Sulfolobus islandicus)).